We begin with the raw amino-acid sequence, 623 residues long: Membralin-like protein At1g60995 (623 aa).

The chain crosses the membrane as a helical span at residues 24 to 44 (GFLEYTYLFVAITLFCILVVM). The interval 99-119 (SLEVSKTDQESSTSEENTDDT) is disordered. 4 helical membrane passes run 315-335 (GVLM…SFTL), 363-383 (IFVH…ILFF), 392-412 (LLAF…LISV), and 424-444 (FFLL…YGFS). 2 disordered regions span residues 506-567 (NRTT…QAGA) and 602-623 (EAQV…LSVD). A compositionally biased stretch (polar residues) spans 514–531 (PSGPNHTTPNQNTETRSF).

Belongs to the membralin family.

It is found in the membrane. This Arabidopsis thaliana (Mouse-ear cress) protein is Membralin-like protein At1g60995.